The chain runs to 616 residues: Dihydroxy-acid dehydratase (616 aa).

D81 contributes to the Mg(2+) binding site. C122 lines the [2Fe-2S] cluster pocket. Mg(2+) is bound by residues D123 and K124. K124 carries the N6-carboxylysine modification. Residue C195 participates in [2Fe-2S] cluster binding. Position 491 (E491) interacts with Mg(2+). The active-site Proton acceptor is S517.

The protein belongs to the IlvD/Edd family. In terms of assembly, homodimer. Requires [2Fe-2S] cluster as cofactor. The cofactor is Mg(2+).

The catalysed reaction is (2R)-2,3-dihydroxy-3-methylbutanoate = 3-methyl-2-oxobutanoate + H2O. It carries out the reaction (2R,3R)-2,3-dihydroxy-3-methylpentanoate = (S)-3-methyl-2-oxopentanoate + H2O. The protein operates within amino-acid biosynthesis; L-isoleucine biosynthesis; L-isoleucine from 2-oxobutanoate: step 3/4. It functions in the pathway amino-acid biosynthesis; L-valine biosynthesis; L-valine from pyruvate: step 3/4. Its function is as follows. Functions in the biosynthesis of branched-chain amino acids. Catalyzes the dehydration of (2R,3R)-2,3-dihydroxy-3-methylpentanoate (2,3-dihydroxy-3-methylvalerate) into 2-oxo-3-methylpentanoate (2-oxo-3-methylvalerate) and of (2R)-2,3-dihydroxy-3-methylbutanoate (2,3-dihydroxyisovalerate) into 2-oxo-3-methylbutanoate (2-oxoisovalerate), the penultimate precursor to L-isoleucine and L-valine, respectively. The chain is Dihydroxy-acid dehydratase from Escherichia coli O8 (strain IAI1).